The chain runs to 430 residues: 5-methylthioadenosine/S-adenosylhomocysteine deaminase (430 aa).

Residues H63 and H65 each contribute to the Zn(2+) site. Substrate-binding residues include E92, R144, and H182. H209 serves as a coordination point for Zn(2+). Substrate-binding residues include E212 and D297. Position 297 (D297) interacts with Zn(2+).

Belongs to the metallo-dependent hydrolases superfamily. MTA/SAH deaminase family. Zn(2+) is required as a cofactor.

It catalyses the reaction S-adenosyl-L-homocysteine + H2O + H(+) = S-inosyl-L-homocysteine + NH4(+). The catalysed reaction is S-methyl-5'-thioadenosine + H2O + H(+) = S-methyl-5'-thioinosine + NH4(+). Its function is as follows. Catalyzes the deamination of 5-methylthioadenosine and S-adenosyl-L-homocysteine into 5-methylthioinosine and S-inosyl-L-homocysteine, respectively. Is also able to deaminate adenosine. In Desulforudis audaxviator (strain MP104C), this protein is 5-methylthioadenosine/S-adenosylhomocysteine deaminase.